The sequence spans 473 residues: Cysteine--tRNA ligase (473 aa).

Residue cysteine 28 coordinates Zn(2+). The short motif at 30 to 40 (MTVYDYCHLGH) is the 'HIGH' region element. Zn(2+)-binding residues include cysteine 209, histidine 234, and glutamate 238. The short motif at 282–286 (KMSKS) is the 'KMSKS' region element. Lysine 285 is an ATP binding site.

It belongs to the class-I aminoacyl-tRNA synthetase family. Monomer. Zn(2+) is required as a cofactor.

Its subcellular location is the cytoplasm. It carries out the reaction tRNA(Cys) + L-cysteine + ATP = L-cysteinyl-tRNA(Cys) + AMP + diphosphate. This chain is Cysteine--tRNA ligase, found in Neisseria meningitidis serogroup B (strain ATCC BAA-335 / MC58).